A 96-amino-acid polypeptide reads, in one-letter code: uncharacterized protein (96 aa).

Functionally, essential for virus function. This is an uncharacterized protein from Saccharolobus solfataricus (Sulfolobus solfataricus).